The primary structure comprises 891 residues: MSSTLREASKDTLQAKDKTYHYYSLPLAAKSLGDIARLPKSLKVLLENLLRWQDGESVTDEDIQALAGWLKNAHADREIAWRPARVLMQDFTGVPAVVDLAAMREAVKRLGGDTSKVNPLSPVDLVIDHSVTVDHFGDDDAFEENVRLEMERNHERYMFLKWGKQAFSRFSVVPPGTGICHQVNLEYLGKAVWSELQDGEWIAYPDSLVGTDSHTTMINGLGVLGWGVGGIEAEAAMLGQPVSMLIPDVVGFKLTGKLREGITATDLVLTVTQMLRKHGVVGKFVEFYGDGLDSLPLADRATIANMSPEYGATCGFFPIDAITLEYMRLSGRSDDLVELVETYAKAQGMWRNPGDEPVFTSTLELDMGDVEASLAGPKRPQDRVALGDVPKAFAASAELELNTAQRDRQPVDYTMNGQPYQLPDGAVVIAAITSCTNTSNPSVLMAAGLLAKKAVTLGLKRQPWVKASLAPGSKVVSDYLAQAKLTPYLDELGFNLVGYGCTTCIGNSGPLPEPIETAIKKGDLTVGAVLSGNRNFEGRIHPLVKTNWLASPPLVVAYALAGNMNINLATDPLGYDRKGDPVYLKDIWPSAQEIARAVELVSSDMFRKEYAEVFEGTEEWKSIQVESSDTYGWQSDSTYIRLSPFFDEMQAQPAPVKDIHGARILAMLGDSVTTDHISPAGSIKPDSPAGRYLQNHGVERKDFNSYGSRRGNHEVMMRGTFANIRIRNEMLPGVEGGMTRHLPGTEAMSIYDAAMLYQQEKTPLAVIAGKEYGSGSSRDWAAKGPRLLGIRVVIAESFERIHRSNLIGMGILPLEFPQGVTRKTLGLTGEEVIDIADLQNLRPGATIPVTLTRSDGSKETVPCRCRIDTATELTYYQNDGILHYVIRNMLN.

The [4Fe-4S] cluster site is built by C435, C501, and C504.

It belongs to the aconitase/IPM isomerase family. As to quaternary structure, monomer. [4Fe-4S] cluster is required as a cofactor.

The enzyme catalyses citrate = D-threo-isocitrate. The catalysed reaction is (2S,3R)-3-hydroxybutane-1,2,3-tricarboxylate = 2-methyl-cis-aconitate + H2O. Its pathway is carbohydrate metabolism; tricarboxylic acid cycle; isocitrate from oxaloacetate: step 2/2. The protein operates within organic acid metabolism; propanoate degradation. Involved in the catabolism of short chain fatty acids (SCFA) via the tricarboxylic acid (TCA)(acetyl degradation route) and the 2-methylcitrate cycle I (propionate degradation route). Catalyzes the reversible isomerization of citrate to isocitrate via cis-aconitate. Also catalyzes the hydration of 2-methyl-cis-aconitate to yield (2R,3S)-2-methylisocitrate. The (2S,3S)-2-methylcitrate (2-MC) is a very poor substrate. The apo form of AcnA functions as a RNA-binding regulatory protein. The sequence is that of Aconitate hydratase A (acnA) from Salmonella typhimurium (strain LT2 / SGSC1412 / ATCC 700720).